The following is a 177-amino-acid chain: ATP synthase subunit b (177 aa).

Residues 35–55 form a helical membrane-spanning segment; sequence FFVVLAIFLIVLAVIGTFVVP.

Belongs to the ATPase B chain family. As to quaternary structure, F-type ATPases have 2 components, F(1) - the catalytic core - and F(0) - the membrane proton channel. F(1) has five subunits: alpha(3), beta(3), gamma(1), delta(1), epsilon(1). F(0) has three main subunits: a(1), b(2) and c(10-14). The alpha and beta chains form an alternating ring which encloses part of the gamma chain. F(1) is attached to F(0) by a central stalk formed by the gamma and epsilon chains, while a peripheral stalk is formed by the delta and b chains.

It is found in the cell membrane. Functionally, f(1)F(0) ATP synthase produces ATP from ADP in the presence of a proton or sodium gradient. F-type ATPases consist of two structural domains, F(1) containing the extramembraneous catalytic core and F(0) containing the membrane proton channel, linked together by a central stalk and a peripheral stalk. During catalysis, ATP synthesis in the catalytic domain of F(1) is coupled via a rotary mechanism of the central stalk subunits to proton translocation. Its function is as follows. Component of the F(0) channel, it forms part of the peripheral stalk, linking F(1) to F(0). The chain is ATP synthase subunit b from Mycobacteroides abscessus (strain ATCC 19977 / DSM 44196 / CCUG 20993 / CIP 104536 / JCM 13569 / NCTC 13031 / TMC 1543 / L948) (Mycobacterium abscessus).